Consider the following 185-residue polypeptide: Elongation factor P (185 aa).

The protein belongs to the elongation factor P family.

It is found in the cytoplasm. It functions in the pathway protein biosynthesis; polypeptide chain elongation. Involved in peptide bond synthesis. Stimulates efficient translation and peptide-bond synthesis on native or reconstituted 70S ribosomes in vitro. Probably functions indirectly by altering the affinity of the ribosome for aminoacyl-tRNA, thus increasing their reactivity as acceptors for peptidyl transferase. This Listeria innocua serovar 6a (strain ATCC BAA-680 / CLIP 11262) protein is Elongation factor P.